Consider the following 485-residue polypeptide: E3 ubiquitin-protein ligase TRIM34B (485 aa).

Residues 15–58 (CPVCQELLTKALSLGCGHLVCQACLISNKNAVINPRGKSSCPVC) form an RING-type zinc finger. Residues 91 to 127 (TKRDLCVHHGEKLLLFCKEDKKVICWVCERSQEHRGH) form a B box-type zinc finger. 4 residues coordinate Zn(2+): C96, H99, C118, and H124. Residues 136–170 (VRECQENLQKALTRLRKEQEKVETLEADIKEDRLS) are a coiled coil. The B30.2/SPRY domain maps to 282-485 (LSGMLQKFRE…APMTLCPLNS (204 aa)).

Belongs to the TRIM/RBCC family. Homotrimer. Interacts (via B-box and SPRY domain) with TRIM5.

The protein localises to the cytoplasm. It is found in the mitochondrion. The enzyme catalyses S-ubiquitinyl-[E2 ubiquitin-conjugating enzyme]-L-cysteine + [acceptor protein]-L-lysine = [E2 ubiquitin-conjugating enzyme]-L-cysteine + N(6)-ubiquitinyl-[acceptor protein]-L-lysine.. The protein operates within protein modification; protein ubiquitination. Its function is as follows. Functions as antiviral protein and contributes to the defense against retroviral infections. Acts as a capsid-specific restriction factor with the help of TRIM5 and prevents infection from non-host-adapted retroviruses. During influenza A virus infection, promotes programmed cell death by targeting ZBP1 for 'Lys-63'-linked polyubiquitination. In turn, promotes ZBP1 recruitment of RIPK3 to mediate virus-induced programmed necrosis. Negatively regulates the function of mitochondria by enhancing mitochondrial depolarization leading to cytochrome c release and mitochondria-dependent apoptosis. Also promotes the formation of multinucleated giant cells by means of cell fusion and phagocytosis in epithelial cells. Regulates intestinal inflammation by controlling the exocytosis of the major component of colonic mucus MUC2 from colonic goblet cells. The sequence is that of E3 ubiquitin-protein ligase TRIM34B from Mus musculus (Mouse).